The primary structure comprises 520 residues: Keratin, type II cytoskeletal 72 (520 aa).

Residues 1-133 (MSRQLTLYPG…DPEIQKVRAQ (133 aa)) are head. Residues 134 to 169 (EREQIKALNNKFASFIDKVRFLEQQNQVLETKWELL) are coil 1A. Residues 134 to 447 (EREQIKALNN…KLLESEESRM (314 aa)) form the IF rod domain. A linker 1 region spans residues 170 to 188 (QQLDLNNSKRSLEPVHESY). The interval 189 to 280 (ISNLQKQLEI…VLFEGEIAQM (92 aa)) is coil 1B. The interval 281–304 (QSHISDTSVILSMDNNRQLDLDSI) is linker 12. Residues 305–443 (LAEVRAQYEE…ATYRKLLESE (139 aa)) are coil 2. The tail stretch occupies residues 444 to 520 (ESRMAGEYPN…SSGTTKKTSR (77 aa)). Positions 494 to 520 (KGSCGSELKDPPAKTSGSSGTTKKTSR) are disordered. Low complexity predominate over residues 507 to 520 (KTSGSSGTTKKTSR).

This sequence belongs to the intermediate filament family. Heterotetramer of two type I and two type II keratins.

Its function is as follows. Has a role in hair formation. Specific component of keratin intermediate filaments in the inner root sheath (IRS) of the hair follicle. The protein is Keratin, type II cytoskeletal 72 (Krt72) of Mus musculus (Mouse).